A 110-amino-acid chain; its full sequence is Phosphoribosyl-ATP pyrophosphatase (110 aa).

The protein belongs to the PRA-PH family.

The protein localises to the cytoplasm. The enzyme catalyses 1-(5-phospho-beta-D-ribosyl)-ATP + H2O = 1-(5-phospho-beta-D-ribosyl)-5'-AMP + diphosphate + H(+). The protein operates within amino-acid biosynthesis; L-histidine biosynthesis; L-histidine from 5-phospho-alpha-D-ribose 1-diphosphate: step 2/9. This Pseudomonas fluorescens (strain Pf0-1) protein is Phosphoribosyl-ATP pyrophosphatase.